The chain runs to 140 residues: Seminal plasma protein A3 (140 aa).

Residues 1 to 25 form the signal peptide; sequence MALRLGLFLIWAGVSMFLQLDPVNG. Fibronectin type-II domains follow at residues 49–93 and 94–140; these read TKDN…YCTK and NDYA…WKYC. 4 cysteine pairs are disulfide-bonded: Cys-54–Cys-78, Cys-68–Cys-91, Cys-99–Cys-125, and Cys-113–Cys-140.

Belongs to the seminal plasma protein family.

It is found in the secreted. Its function is as follows. The BSP-A proteins from seminal plasma exhibit both simulatory and inhibitory actions on the release of pituitary gonadotropins. The exact function of these proteins is not known. This Bos taurus (Bovine) protein is Seminal plasma protein A3.